The following is a 505-amino-acid chain: Maturase K (505 aa).

The protein belongs to the intron maturase 2 family. MatK subfamily.

The protein localises to the plastid. Its subcellular location is the chloroplast. Usually encoded in the trnK tRNA gene intron. Probably assists in splicing its own and other chloroplast group II introns. The chain is Maturase K from Silene otites (Spanish catchfly).